The primary structure comprises 507 residues: Cystathionine beta-synthase (507 aa).

Lysine 53 is subject to N6-(pyridoxal phosphate)lysine. Asparagine 84 provides a ligand contact to pyridoxal 5'-phosphate. Residue serine 134 is modified to Phosphoserine. Residues 196–200 (GTGGT) and serine 289 contribute to the pyridoxal 5'-phosphate site. Phosphoserine occurs at positions 350 and 424. The 60-residue stretch at 373 to 432 (HLKPVVSVKETAKVTDVIKILKDNGFDQLPVLTEDGKLSGLVTLSELLRKLSINNSNNDN) folds into the CBS domain.

Belongs to the cysteine synthase/cystathionine beta-synthase family. Pyridoxal 5'-phosphate serves as cofactor.

It catalyses the reaction L-homocysteine + L-serine = L,L-cystathionine + H2O. The protein operates within amino-acid biosynthesis; L-cysteine biosynthesis; L-cysteine from L-homocysteine and L-serine: step 1/2. The sequence is that of Cystathionine beta-synthase (CYS4) from Saccharomyces cerevisiae (strain ATCC 204508 / S288c) (Baker's yeast).